Here is a 376-residue protein sequence, read N- to C-terminus: Aminomethyltransferase (376 aa).

It belongs to the GcvT family. The glycine cleavage system is composed of four proteins: P, T, L and H.

It carries out the reaction N(6)-[(R)-S(8)-aminomethyldihydrolipoyl]-L-lysyl-[protein] + (6S)-5,6,7,8-tetrahydrofolate = N(6)-[(R)-dihydrolipoyl]-L-lysyl-[protein] + (6R)-5,10-methylene-5,6,7,8-tetrahydrofolate + NH4(+). The glycine cleavage system catalyzes the degradation of glycine. This chain is Aminomethyltransferase, found in Nostoc sp. (strain PCC 7120 / SAG 25.82 / UTEX 2576).